Reading from the N-terminus, the 597-residue chain is NADH-quinone oxidoreductase subunit C/D (597 aa).

Residues 1–188 form an NADH dehydrogenase I subunit C region; sequence MKKEIKRDDV…DPYVLNKYKE (188 aa). Residues 211–597 form an NADH dehydrogenase I subunit D region; sequence KYMFLNLGPN…IDFVMSDVDR (387 aa).

In the N-terminal section; belongs to the complex I 30 kDa subunit family. The protein in the C-terminal section; belongs to the complex I 49 kDa subunit family. In terms of assembly, NDH-1 is composed of 13 different subunits. Subunits NuoB, CD, E, F, and G constitute the peripheral sector of the complex.

It localises to the cell inner membrane. It catalyses the reaction a quinone + NADH + 5 H(+)(in) = a quinol + NAD(+) + 4 H(+)(out). NDH-1 shuttles electrons from NADH, via FMN and iron-sulfur (Fe-S) centers, to quinones in the respiratory chain. The immediate electron acceptor for the enzyme in this species is believed to be ubiquinone. Couples the redox reaction to proton translocation (for every two electrons transferred, four hydrogen ions are translocated across the cytoplasmic membrane), and thus conserves the redox energy in a proton gradient. This chain is NADH-quinone oxidoreductase subunit C/D, found in Buchnera aphidicola subsp. Baizongia pistaciae (strain Bp).